We begin with the raw amino-acid sequence, 545 residues long: ATP synthase subunit alpha (545 aa).

An ATP-binding site is contributed by 173–180; sequence GDRKTGKT.

The protein belongs to the ATPase alpha/beta chains family. F-type ATPases have 2 components, CF(1) - the catalytic core - and CF(0) - the membrane proton channel. CF(1) has five subunits: alpha(3), beta(3), gamma(1), delta(1), epsilon(1). CF(0) has three main subunits: a(1), b(2) and c(9-12). The alpha and beta chains form an alternating ring which encloses part of the gamma chain. CF(1) is attached to CF(0) by a central stalk formed by the gamma and epsilon chains, while a peripheral stalk is formed by the delta and b chains.

It is found in the cell membrane. It catalyses the reaction ATP + H2O + 4 H(+)(in) = ADP + phosphate + 5 H(+)(out). Functionally, produces ATP from ADP in the presence of a proton gradient across the membrane. The alpha chain is a regulatory subunit. This Renibacterium salmoninarum (strain ATCC 33209 / DSM 20767 / JCM 11484 / NBRC 15589 / NCIMB 2235) protein is ATP synthase subunit alpha.